Reading from the N-terminus, the 184-residue chain is MNWRSEHIWIELITGSRKTSNFCWACILFLGSLGFLVVGTSSYLGKNLISVFPSQQILFFPQGIVMSFYGIAGLFISSYLWCTISWNVGSGYDRFDRKEGIMSLFRWGFPGRDRRIFLRFFLKDIQSIRMEVREGLFPRRVLYMEIKGQGAIPLTRTDEDLTPREIEQKAAELAYFLRVPIEVF.

The next 2 helical transmembrane spans lie at 22–42 (FCWA…GTSS) and 57–77 (ILFF…LFIS).

It belongs to the Ycf4 family.

It localises to the plastid. Its subcellular location is the chloroplast thylakoid membrane. Its function is as follows. Seems to be required for the assembly of the photosystem I complex. This is Photosystem I assembly protein Ycf4 from Phalaenopsis aphrodite subsp. formosana (Moth orchid).